The chain runs to 224 residues: Small ribosomal subunit protein uS3 (224 aa).

Residues 39 to 107 form the KH type-2 domain; sequence IREFLKKKPS…DVWVEIAEVK (69 aa).

The protein belongs to the universal ribosomal protein uS3 family. As to quaternary structure, part of the 30S ribosomal subunit. Forms a tight complex with proteins S10 and S14.

Binds the lower part of the 30S subunit head. Binds mRNA in the 70S ribosome, positioning it for translation. The protein is Small ribosomal subunit protein uS3 of Chlamydia trachomatis serovar D (strain ATCC VR-885 / DSM 19411 / UW-3/Cx).